The sequence spans 118 residues: Down syndrome critical region protein 4 (118 aa).

Positions 1 to 39 are disordered; the sequence is MSLIILTRDDEPRIFTPDSDAASPALHSTSPLPDPASAS. The span at 28–39 shows a compositional bias: low complexity; that stretch reads STSPLPDPASAS.

In terms of tissue distribution, mainly expressed in placenta.

In Homo sapiens (Human), this protein is Down syndrome critical region protein 4 (DSCR4).